The following is a 244-amino-acid chain: Tetraspanin-2A (244 aa).

Topologically, residues 1–22 (MGIGYGASDEQLEKQIGCVKYT) are cytoplasmic. Residues 23 to 43 (LFCFNIVAWMISTALFALTVW) form a helical membrane-spanning segment. Residues 44-61 (LRAEPGFNDWLRILEAQS) are Extracellular-facing. Residues 62–82 (FYIGVYVLIGISIVMMAVSFL) traverse the membrane as a helical segment. The Cytoplasmic portion of the chain corresponds to 83–91 (GCLSALMEN). A helical transmembrane segment spans residues 92–112 (TLALFVFVGTQVFGFIAIVAG). The Extracellular portion of the chain corresponds to 113–206 (SAVLLQFSTI…TWFFEGKTGW (94 aa)). The helical transmembrane segment at 207 to 227 (IVALAMTLGLLNVICAVMSFV) threads the bilayer. Topologically, residues 228-244 (LVQAVKKEEEQASNYRR) are cytoplasmic.

This sequence belongs to the tetraspanin (TM4SF) family. As to quaternary structure, forms a complex with Ssk and mesh.

The protein localises to the apicolateral cell membrane. It localises to the cell junction. Its subcellular location is the septate junction. Its function is as follows. Required for assembly of smooth septate junctions (sSJs), together with Ssk and mesh. Important for barrier function of the midgut epithelium. This is Tetraspanin-2A from Drosophila melanogaster (Fruit fly).